A 298-amino-acid chain; its full sequence is Elongation factor Ts (298 aa).

Residues 79–82 (TDFV) are involved in Mg(2+) ion dislocation from EF-Tu.

This sequence belongs to the EF-Ts family.

Its subcellular location is the cytoplasm. Functionally, associates with the EF-Tu.GDP complex and induces the exchange of GDP to GTP. It remains bound to the aminoacyl-tRNA.EF-Tu.GTP complex up to the GTP hydrolysis stage on the ribosome. This chain is Elongation factor Ts (tsf), found in Mycoplasma genitalium (strain ATCC 33530 / DSM 19775 / NCTC 10195 / G37) (Mycoplasmoides genitalium).